Here is a 405-residue protein sequence, read N- to C-terminus: Maintenance of mitochondrial morphology protein 1 (405 aa).

Topologically, residues 1 to 86 (MQVLNFYVNP…TGSTKSFTQG (86 aa)) are lumenal. The helical transmembrane segment at 87 to 107 (LIIGQLSVIILLGIFIKFFVF) threads the bilayer. The Cytoplasmic segment spans residues 108–405 (ADSSTTSSTS…QPVSTTESDH (298 aa)). One can recognise an SMP-LTD domain in the interval 166 to 385 (APESLDWFNV…EPRFQVVKLP (220 aa)). A disordered region spans residues 303–324 (SEPRVAMDSPQSTRDDNSEEPN).

It belongs to the MMM1 family. Homodimer. Component of the ER-mitochondria encounter structure (ERMES) or MDM complex, composed of MMM1, MDM10, MDM12 and MDM34. An MMM1 homodimer associates with one molecule of MDM12 on each side in a pairwise head-to-tail manner, and the SMP-LTD domains of MMM1 and MDM12 generate a continuous hydrophobic tunnel for phospholipid trafficking.

It is found in the endoplasmic reticulum membrane. Its function is as follows. Component of the ERMES/MDM complex, which serves as a molecular tether to connect the endoplasmic reticulum (ER) and mitochondria. Components of this complex are involved in the control of mitochondrial shape and protein biogenesis, and function in nonvesicular lipid trafficking between the ER and mitochondria. The MDM12-MMM1 subcomplex functions in the major beta-barrel assembly pathway that is responsible for biogenesis of all outer membrane beta-barrel proteins, and acts in a late step after the SAM complex. The MDM10-MDM12-MMM1 subcomplex further acts in the TOM40-specific pathway after the action of the MDM12-MMM1 complex. Essential for establishing and maintaining the structure of mitochondria and maintenance of mtDNA nucleoids. This chain is Maintenance of mitochondrial morphology protein 1, found in Meyerozyma guilliermondii (strain ATCC 6260 / CBS 566 / DSM 6381 / JCM 1539 / NBRC 10279 / NRRL Y-324) (Yeast).